Reading from the N-terminus, the 252-residue chain is MLVHRLNALKDNYVFVLEDEAARTAAVVDPAEARPVLEALVRLGLKLVAIFNTHHHHDHVGGNRELLEAYPGIAVYASRRDRGRIPGQTVELEDGDTVAFGCERARVIFVPGHTHGHIAYHFAGCGHLFCGDTLFAGGCGRLFEGTARQMQHSLGRLRELPGETQVWCAHEYTLGNLRFAHTLEPDNAELAERLRTVEVLRARKIATVPSTMAAERATNPFLRWESRQLQRAAGAIEPEEVFAHLRALKDRF.

7 residues coordinate Zn(2+): His-54, His-56, Asp-58, His-59, His-113, Asp-132, and His-170.

This sequence belongs to the metallo-beta-lactamase superfamily. Glyoxalase II family. In terms of assembly, monomer. It depends on Zn(2+) as a cofactor.

It catalyses the reaction an S-(2-hydroxyacyl)glutathione + H2O = a 2-hydroxy carboxylate + glutathione + H(+). The protein operates within secondary metabolite metabolism; methylglyoxal degradation; (R)-lactate from methylglyoxal: step 2/2. Functionally, thiolesterase that catalyzes the hydrolysis of S-D-lactoyl-glutathione to form glutathione and D-lactic acid. The polypeptide is Hydroxyacylglutathione hydrolase (Gloeobacter violaceus (strain ATCC 29082 / PCC 7421)).